A 247-amino-acid polypeptide reads, in one-letter code: Probable transcriptional regulatory protein ECA2494 (247 aa).

Belongs to the TACO1 family.

The protein resides in the cytoplasm. In Pectobacterium atrosepticum (strain SCRI 1043 / ATCC BAA-672) (Erwinia carotovora subsp. atroseptica), this protein is Probable transcriptional regulatory protein ECA2494.